The chain runs to 102 residues: Small ribosomal subunit protein uS10 (102 aa).

Residues arginine 33 to alanine 59 form a disordered region.

The protein belongs to the universal ribosomal protein uS10 family. In terms of assembly, part of the 30S ribosomal subunit.

Involved in the binding of tRNA to the ribosomes. This chain is Small ribosomal subunit protein uS10, found in Pyrococcus furiosus (strain ATCC 43587 / DSM 3638 / JCM 8422 / Vc1).